The chain runs to 319 residues: ATP-dependent 6-phosphofructokinase (319 aa).

Glycine 11 is an ATP binding site. 21 to 25 is a binding site for ADP; sequence RAVVR. Residues 72–73 and 102–105 each bind ATP; these read RC and GDGS. Aspartate 103 lines the Mg(2+) pocket. 125-127 lines the substrate pocket; it reads TID. Residue aspartate 127 is the Proton acceptor of the active site. Position 154 (arginine 154) interacts with ADP. Substrate is bound by residues arginine 162 and 169–171; that span reads MGR. ADP contacts are provided by residues 185–187, lysine 211, and 213–215; these read GAE and KMH. Residues glutamate 222, arginine 243, and 249–252 contribute to the substrate site; that span reads HIQR.

This sequence belongs to the phosphofructokinase type A (PFKA) family. ATP-dependent PFK group I subfamily. Prokaryotic clade 'B1' sub-subfamily. As to quaternary structure, homotetramer. Mg(2+) is required as a cofactor.

The protein resides in the cytoplasm. It carries out the reaction beta-D-fructose 6-phosphate + ATP = beta-D-fructose 1,6-bisphosphate + ADP + H(+). It participates in carbohydrate degradation; glycolysis; D-glyceraldehyde 3-phosphate and glycerone phosphate from D-glucose: step 3/4. Allosterically activated by ADP and other diphosphonucleosides, and allosterically inhibited by phosphoenolpyruvate. Catalyzes the phosphorylation of D-fructose 6-phosphate to fructose 1,6-bisphosphate by ATP, the first committing step of glycolysis. The chain is ATP-dependent 6-phosphofructokinase from Clostridium botulinum (strain 657 / Type Ba4).